A 67-amino-acid polypeptide reads, in one-letter code: Large ribosomal subunit protein bL35 (67 aa).

Belongs to the bacterial ribosomal protein bL35 family.

The polypeptide is Large ribosomal subunit protein bL35 (Picosynechococcus sp. (strain ATCC 27264 / PCC 7002 / PR-6) (Agmenellum quadruplicatum)).